The sequence spans 227 residues: PKHD-type hydroxylase ACICU_00484 (227 aa).

Residues Asp78 to Ser178 form the Fe2OG dioxygenase domain. Positions 96, 98, and 159 each coordinate Fe cation. Arg169 serves as a coordination point for 2-oxoglutarate.

It depends on Fe(2+) as a cofactor. L-ascorbate is required as a cofactor.

This Acinetobacter baumannii (strain ACICU) protein is PKHD-type hydroxylase ACICU_00484.